The sequence spans 352 residues: Photosystem II D2 protein (352 aa).

The helical transmembrane segment at cysteine 40–threonine 60 threads the bilayer. Histidine 117 is a binding site for chlorophyll a. A helical transmembrane segment spans residues glycine 124–proline 140. The pheophytin a site is built by glutamine 129 and asparagine 142. The chain crosses the membrane as a helical span at residues valine 152–serine 165. Histidine 197 contributes to the chlorophyll a binding site. Residues glycine 207–aspartate 227 traverse the membrane as a helical segment. Positions 214 and 261 each coordinate a plastoquinone. Histidine 214 is a Fe cation binding site. Fe cation is bound at residue histidine 268. A helical membrane pass occupies residues glycine 278–arginine 294.

Belongs to the reaction center PufL/M/PsbA/D family. In terms of assembly, PSII is composed of 1 copy each of membrane proteins PsbA, PsbB, PsbC, PsbD, PsbE, PsbF, PsbH, PsbI, PsbJ, PsbK, PsbL, PsbM, PsbT, PsbX, PsbY, PsbZ, Psb30/Ycf12, peripheral proteins PsbO, CyanoQ (PsbQ), PsbU, PsbV and a large number of cofactors. It forms dimeric complexes. The D1/D2 heterodimer binds P680, chlorophylls that are the primary electron donor of PSII, and subsequent electron acceptors. It shares a non-heme iron and each subunit binds pheophytin, quinone, additional chlorophylls, carotenoids and lipids. There is also a Cl(-1) ion associated with D1 and D2, which is required for oxygen evolution. The PSII complex binds additional chlorophylls, carotenoids and specific lipids. is required as a cofactor.

It is found in the cellular thylakoid membrane. The catalysed reaction is 2 a plastoquinone + 4 hnu + 2 H2O = 2 a plastoquinol + O2. In terms of biological role, photosystem II (PSII) is a light-driven water:plastoquinone oxidoreductase that uses light energy to abstract electrons from H(2)O, generating O(2) and a proton gradient subsequently used for ATP formation. It consists of a core antenna complex that captures photons, and an electron transfer chain that converts photonic excitation into a charge separation. The D1/D2 (PsbA/PsbD) reaction center heterodimer binds P680, the primary electron donor of PSII as well as several subsequent electron acceptors. D2 is needed for assembly of a stable PSII complex. The polypeptide is Photosystem II D2 protein (Synechococcus sp. (strain RCC307)).